The sequence spans 522 residues: Ankyrin repeat and death domain-containing protein 1A (522 aa).

11 ANK repeats span residues 14–43, 47–76, 90–119, 123–152, 158–187, 191–220, 224–253, 257–286, 290–319, 323–352, and 356–385; these read PLERQLHEAARQNNVGRMQELIGRRVNTRA, VGRVALHWAAGAGHEQAVRLLLEHEAAVDE, FGMNALLLSAWFGHLRILQILVNSGAKIHC, DGLTLLHCAAQKGHVPVLAFIMEDLEDVAL, LGRTAFHRAAEHGQLDALDFLVGSGCDHNV, EGNTALHLAAGRGHMAVLQRLVDIGLDLEE, EGLTALHSAAGGSHPDCVQLLLRAGSTVNA, KNLSCLHYAALSGSEDVSRVLIHAGGCANV, QGASPLHLAVRHNFPALVRLLINSDSDVNA, RQQTPLHLAAEHAWQDIADMLLIAGVDLNL, and QGKTALAVAVRSNHVSLVDMIIKADRFYRW. The Death domain maps to 413-501; sequence SVLWRLASRY…DLAGWSTMAR (89 aa).

This chain is Ankyrin repeat and death domain-containing protein 1A (ANKDD1A), found in Homo sapiens (Human).